Here is a 432-residue protein sequence, read N- to C-terminus: Cyclin-A2 (432 aa).

Met-1 is subject to N-acetylmethionine. Ser-5 carries the post-translational modification Phosphoserine. Disordered stretches follow at residues 26 to 45 (LQEDQENINPEKAAPVQQPR) and 55 to 75 (SGNPRGLAQQQRPKTRRVAPL). The residue at position 55 (Ser-55) is a Phosphoserine.

Belongs to the cyclin family. Cyclin AB subfamily. In terms of assembly, interacts with the CDK1 and CDK2 protein kinases to form serine/threonine kinase holoenzyme complexes. Interacts with CDK1 (hyperphosphorylated form in G1 and underphosphorylated forms in S and G2). Interacts with CDK2; the interaction increases from G1 to G2. Interacts (associated with CDK2 but not with CDK1) with SCAPER; regulates the activity of CCNA2/CDK2 by transiently maintaining CCNA2 in the cytoplasm. Forms a ternary complex with CDK2 and CDKN1B; CDKN1B inhibits the kinase activity of CDK2 through conformational rearrangements. Interacts with INCA1. (Microbial infection) Interacts with human cytomegalovirus protein UL32. Polyubiquitinated via 'Lys-11'-linked ubiquitin by the anaphase-promoting complex (APC/C), leading to its degradation by the proteasome. Deubiquitinated and stabilized by USP37 enables entry into S phase. Ubiquitinated during the G1 phase by the SCF(FBXO31) complex, leading to its proteasomal degradation.

The protein resides in the nucleus. It localises to the cytoplasm. Functionally, cyclin which controls both the G1/S and the G2/M transition phases of the cell cycle. Functions through the formation of specific serine/threonine protein kinase holoenzyme complexes with the cyclin-dependent protein kinases CDK1 or CDK2. The cyclin subunit confers the substrate specificity of these complexes and differentially interacts with and activates CDK1 and CDK2 throughout the cell cycle. This Homo sapiens (Human) protein is Cyclin-A2.